Here is a 369-residue protein sequence, read N- to C-terminus: 3-isopropylmalate dehydrogenase (369 aa).

76-89 (GPKWDRNPSHLRPE) is a binding site for NAD(+). Substrate contacts are provided by Arg-96, Arg-106, Arg-134, and Asp-223. Residues Asp-223, Asp-247, and Asp-251 each coordinate Mg(2+). An NAD(+)-binding site is contributed by 281–293 (GSAPDIAGQNKAN).

It belongs to the isocitrate and isopropylmalate dehydrogenases family. LeuB type 1 subfamily. As to quaternary structure, homodimer. Mg(2+) serves as cofactor. The cofactor is Mn(2+).

The protein resides in the cytoplasm. It catalyses the reaction (2R,3S)-3-isopropylmalate + NAD(+) = 4-methyl-2-oxopentanoate + CO2 + NADH. It participates in amino-acid biosynthesis; L-leucine biosynthesis; L-leucine from 3-methyl-2-oxobutanoate: step 3/4. Its function is as follows. Catalyzes the oxidation of 3-carboxy-2-hydroxy-4-methylpentanoate (3-isopropylmalate) to 3-carboxy-4-methyl-2-oxopentanoate. The product decarboxylates to 4-methyl-2 oxopentanoate. This Priestia megaterium (strain DSM 319 / IMG 1521) (Bacillus megaterium) protein is 3-isopropylmalate dehydrogenase (leuB).